Reading from the N-terminus, the 42-residue chain is Large ribosomal subunit protein bL34c (42 aa).

This sequence belongs to the bacterial ribosomal protein bL34 family.

It is found in the plastid. It localises to the chloroplast. This is Large ribosomal subunit protein bL34c (rpl34) from Olisthodiscus luteus (Marine phytoflagellate).